The following is a 237-amino-acid chain: MWLDWFFPIEMLVVGLSGGVATGKSTVSSVFRAHGVPIIDADQVARQVVVPGTSTYNRLRKEFGDEYFDDEHGGVLRRDKLGKLIFSNPEKRKALNGITHPAIRWEMFKQFLTLLITGTKYIVFDTPLLFESGYDKWIGTTIVVWCDFEQEVERMVTRDNISRADAESRIHAQMDIEEKKKRAKIVIDNNGNIDELREKVKHVIAQLDKSWKPYIFRVAFGIILGVVPYYFFKYIRS.

The DPCK domain occupies Val13–Val218. Gly18–Ser25 is a binding site for ATP.

This sequence belongs to the CoaE family.

This is an uncharacterized protein from Caenorhabditis elegans.